A 765-amino-acid polypeptide reads, in one-letter code: Membrane metallo-endopeptidase-like 1 (765 aa).

At 1 to 19 (MVERAGWCRKKSPGFVEYG) the chain is on the cytoplasmic side. The helical; Signal-anchor for type II membrane protein transmembrane segment at 20-40 (LMVLLLLLLGAIVTLGVFYSI) threads the bilayer. At 41-765 (GKQLPLLTSL…MHPMKRCRIW (725 aa)) the chain is on the lumenal side. The Peptidase M13 domain occupies 74-765 (ICTTPSCVIA…MHPMKRCRIW (692 aa)). Disulfide bonds link Cys-75–Cys-80, Cys-98–Cys-750, Cys-106–Cys-710, Cys-161–Cys-425, and Cys-636–Cys-762. An a peptide-binding site is contributed by Arg-121. Asn-163, Asn-279, Asn-303, and Asn-336 each carry an N-linked (GlcNAc...) asparagine glycan. Positions 523-549 (FENGLQNLKNNAQRSLKKLREKVDQNL) form a coiled coil. Position 599 (His-599) interacts with Zn(2+). Glu-600 is an active-site residue. Residues His-603 and Glu-662 each contribute to the Zn(2+) site. The active-site Proton donor is Asp-666. The N-linked (GlcNAc...) asparagine glycan is linked to Asn-694.

This sequence belongs to the peptidase M13 family. Zn(2+) serves as cofactor. Post-translationally, N-glycosylated. As to expression, highly expressed in testis. Also expressed in ovary. Weakly or not expressed in brain, lung, heart, liver, kidney, adrenal gland and intestine.

The protein localises to the membrane. It is found in the secreted. It catalyses the reaction Preferential cleavage of polypeptides between hydrophobic residues, particularly with Phe or Tyr at P1'.. Its activity is regulated as follows. Inhibited by thiorphan and phosphoramidon. In terms of biological role, metalloprotease involved in sperm function, possibly by modulating the processes of fertilization and early embryonic development. Degrades a broad variety of small peptides with a preference for peptides shorter than 3 kDa containing neutral bulky aliphatic or aromatic amino acid residues. Shares the same substrate specificity with MME and cleaves peptides at the same amide bond. The chain is Membrane metallo-endopeptidase-like 1 (Mmel1) from Mus musculus (Mouse).